A 429-amino-acid chain; its full sequence is Ribosomal RNA small subunit methyltransferase B (429 aa).

S-adenosyl-L-methionine-binding positions include 254-260, D277, D303, and D322; that span reads CAAPGGK. C375 functions as the Nucleophile in the catalytic mechanism.

The protein belongs to the class I-like SAM-binding methyltransferase superfamily. RsmB/NOP family.

The protein localises to the cytoplasm. The enzyme catalyses cytidine(967) in 16S rRNA + S-adenosyl-L-methionine = 5-methylcytidine(967) in 16S rRNA + S-adenosyl-L-homocysteine + H(+). In terms of biological role, specifically methylates the cytosine at position 967 (m5C967) of 16S rRNA. The sequence is that of Ribosomal RNA small subunit methyltransferase B from Escherichia coli O6:H1 (strain CFT073 / ATCC 700928 / UPEC).